Here is a 561-residue protein sequence, read N- to C-terminus: Arginine--tRNA ligase (561 aa).

Positions 128-138 (ANPTGPLHVGH) match the 'HIGH' region motif.

The protein belongs to the class-I aminoacyl-tRNA synthetase family. As to quaternary structure, monomer.

It localises to the cytoplasm. The catalysed reaction is tRNA(Arg) + L-arginine + ATP = L-arginyl-tRNA(Arg) + AMP + diphosphate. This Leptothrix cholodnii (strain ATCC 51168 / LMG 8142 / SP-6) (Leptothrix discophora (strain SP-6)) protein is Arginine--tRNA ligase.